The chain runs to 359 residues: Doublesex- and mab-3-related transcription factor B1 (359 aa).

Positions 7–54 (CSRCRNHGYLVPVKGHTGKCRWKQCICDKCYLITERQKIMAAQKVLRT) form a DNA-binding region, DM. Disordered stretches follow at residues 111–149 (PPQAPSPGPSTFQLGPSGRPGPSTFQPGPGAPGGLRDRS) and 262–359 (SGLV…EQSN). Pro residues-rich tracts occupy residues 277 to 299 (CSPPPPPPPPPPPPLPAPPPQPQ) and 315 to 325 (LPPPPPPPSPP). Over residues 348–359 (EPSQDSPQEQSN) the composition is skewed to polar residues.

It belongs to the DMRT family. Brain.

The protein localises to the nucleus. This is Doublesex- and mab-3-related transcription factor B1 (Dmrtb1) from Mus musculus (Mouse).